The sequence spans 389 residues: Galactose-1-phosphate uridylyltransferase (389 aa).

Belongs to the galactose-1-phosphate uridylyltransferase type 2 family.

It is found in the cytoplasm. The enzyme catalyses alpha-D-galactose 1-phosphate + UDP-alpha-D-glucose = alpha-D-glucose 1-phosphate + UDP-alpha-D-galactose. It participates in carbohydrate metabolism; galactose metabolism. The protein is Galactose-1-phosphate uridylyltransferase (galT) of Butyrivibrio fibrisolvens.